The following is a 153-amino-acid chain: Ribosome maturation factor RimP (153 aa).

The protein belongs to the RimP family.

Its subcellular location is the cytoplasm. Required for maturation of 30S ribosomal subunits. The chain is Ribosome maturation factor RimP from Clostridium botulinum (strain Loch Maree / Type A3).